A 547-amino-acid polypeptide reads, in one-letter code: Chaperonin GroEL (547 aa).

Residues 30–33 (TLGP), Lys51, 87–91 (DGTTT), Gly415, and Asp495 each bind ATP.

Belongs to the chaperonin (HSP60) family. Forms a cylinder of 14 subunits composed of two heptameric rings stacked back-to-back. Interacts with the co-chaperonin GroES.

The protein localises to the cytoplasm. It carries out the reaction ATP + H2O + a folded polypeptide = ADP + phosphate + an unfolded polypeptide.. Its function is as follows. Together with its co-chaperonin GroES, plays an essential role in assisting protein folding. The GroEL-GroES system forms a nano-cage that allows encapsulation of the non-native substrate proteins and provides a physical environment optimized to promote and accelerate protein folding. The chain is Chaperonin GroEL from Ralstonia nicotianae (strain ATCC BAA-1114 / GMI1000) (Ralstonia solanacearum).